We begin with the raw amino-acid sequence, 534 residues long: MATKLDTSSLLLALLSKCSLLTQTNLALSLLVASLASLALSLFFWSHPGGPAWGKYFLHRRRQTTVIPGPRGLPFVGSMSLMSNTLAHRCIAATAEKFRAERLMAFSLGETRVIVTCNPDVAKEILNSPVFADRPVKESAYSLMFNRAIGFAPYGVYWRTLRKIASNHLFSPKQIKRSETQRSVIANQIVKCLTKQSNTKGLCFARDLIKTASLNNMMCSVFGKEYELEEEHEEVSELRELVEEGYDLLGTLNWTDHLPWLSEFDPQRIRSRCSNLVPKVNRFVNRIISDHREQTRDSPSDFVDVLLSLDGPDKLSDPDIIAVLWEMIFRGTDTVAVLIEWILARMVLHPDIQSTVHNELDQIVGRSRAVEESDVVSLVYLTAVVKEVLRLHPPGPLLSWARLAITDTIIDGRRVPAGTTAMVNMWAIAHDPHVWENPLEFKPERFVAKEGEVEFSVLGSDLRLAPFGSGRRVCPGKNLGLTTVTFWTATLLHEFEWLTPSDEKTVDLSEKLRLSCEMANPLAAKLRPRRSFSV.

Residues 26-46 traverse the membrane as a helical segment; the sequence is LALSLLVASLASLALSLFFWS. A heme-binding site is contributed by Cys-474.

Belongs to the cytochrome P450 family. Heme is required as a cofactor. As to expression, expressed in the funiculus of developing ovules.

The protein resides in the membrane. Its function is as follows. Plays a role in seed and fruit development. Functions probably in association with CYP78A6 in the regulation of seed growth. The sequence is that of Cytochrome P450 78A9 (CYP78A9) from Arabidopsis thaliana (Mouse-ear cress).